A 271-amino-acid chain; its full sequence is MRFSVLLTGLAAAGSIATAERTCGAVPPRAYEKEFTEALNSLSPEAASADLTAGITIDTYLHVLTSGQTGNIPDSQLQAQINAMNQHYSQAGVQFRLVKATRTDNANWASGRDEAGMKKALHMGTYSSLNIYFIPNLSSGLLGICYFPRANPSQTTIIMDGCMVRSGTVPGGETTNYNQGKTATHEVGHFLGLYHVFSENGSCVDADMVADTPAQSKKTSGCPSSQDSCPGGGVDSIHNYMDYSYDVCMNQFTPGQANRIAQSWRAFRAGH.

A signal peptide spans 1–19; it reads MRFSVLLTGLAAAGSIATA. N-linked (GlcNAc...) asparagine glycosylation is present at N136. H185 lines the Zn(2+) pocket. E186 is an active-site residue. H189 provides a ligand contact to Zn(2+). N-linked (GlcNAc...) asparagine glycosylation occurs at N200. C222 and C248 are disulfide-bonded.

The protein belongs to the peptidase M43B family.

It is found in the secreted. Functionally, secreted metalloproteinase that allows assimilation of proteinaceous substrates. Plays a pivotal role as a pathogenicity determinant during infections and contributes to the ability of the pathogen to persist within the mammalian host. This chain is Extracellular metalloprotease TRV_06892, found in Trichophyton verrucosum (strain HKI 0517).